A 178-amino-acid polypeptide reads, in one-letter code: Large ribosomal subunit protein uL6 (178 aa).

Belongs to the universal ribosomal protein uL6 family. In terms of assembly, part of the 50S ribosomal subunit.

This protein binds to the 23S rRNA, and is important in its secondary structure. It is located near the subunit interface in the base of the L7/L12 stalk, and near the tRNA binding site of the peptidyltransferase center. The polypeptide is Large ribosomal subunit protein uL6 (Campylobacter fetus subsp. fetus (strain 82-40)).